The following is a 101-amino-acid chain: Small ribosomal subunit protein uS14 (101 aa).

The protein belongs to the universal ribosomal protein uS14 family. As to quaternary structure, part of the 30S ribosomal subunit. Contacts proteins S3 and S10.

Binds 16S rRNA, required for the assembly of 30S particles and may also be responsible for determining the conformation of the 16S rRNA at the A site. The polypeptide is Small ribosomal subunit protein uS14 (Aromatoleum aromaticum (strain DSM 19018 / LMG 30748 / EbN1) (Azoarcus sp. (strain EbN1))).